A 561-amino-acid chain; its full sequence is Liver carboxylesterase B-1 (561 aa).

Positions 1–18 (MCLRSLFLVSLATCVVCG) are cleaved as a signal peptide. N-linked (GlcNAc...) asparagine glycosylation is present at Asn79. A disulfide bond links Cys87 and Cys116. Catalysis depends on Ser221, which acts as the Acyl-ester intermediate. Cysteines 273 and 284 form a disulfide. Residues Glu353 and His466 each act as charge relay system in the active site. Positions 558–561 (HNEL) match the Prevents secretion from ER motif.

It belongs to the type-B carboxylesterase/lipase family. Monomer.

It is found in the endoplasmic reticulum lumen. It carries out the reaction a carboxylic ester + H2O = an alcohol + a carboxylate + H(+). Its function is as follows. Involved in the detoxification of xenobiotics and in the activation of ester and amide prodrugs. In Rattus norvegicus (Rat), this protein is Liver carboxylesterase B-1.